A 347-amino-acid polypeptide reads, in one-letter code: Aspartate-semialdehyde dehydrogenase (347 aa).

Residues 10–13 (TGMV) and 37–38 (RS) contribute to the NADP(+) site. Phosphate is bound at residue arginine 108. Cysteine 147 acts as the Acyl-thioester intermediate in catalysis. Glutamine 174 provides a ligand contact to substrate. Position 177–178 (177–178 (SG)) interacts with NADP(+). Glutamate 200 serves as a coordination point for substrate. Lysine 203 lines the phosphate pocket. Position 233 (arginine 233) interacts with substrate. The Proton acceptor role is filled by histidine 240. Positions 276–299 (APEKPVVVRDEENRPQPRMDRDMD) are disordered. Residues 281–299 (VVVRDEENRPQPRMDRDMD) are compositionally biased toward basic and acidic residues. Residue 327 to 328 (NT) participates in NADP(+) binding.

The protein belongs to the aspartate-semialdehyde dehydrogenase family. As to quaternary structure, homodimer.

The enzyme catalyses L-aspartate 4-semialdehyde + phosphate + NADP(+) = 4-phospho-L-aspartate + NADPH + H(+). It participates in amino-acid biosynthesis; L-lysine biosynthesis via DAP pathway; (S)-tetrahydrodipicolinate from L-aspartate: step 2/4. The protein operates within amino-acid biosynthesis; L-methionine biosynthesis via de novo pathway; L-homoserine from L-aspartate: step 2/3. Its pathway is amino-acid biosynthesis; L-threonine biosynthesis; L-threonine from L-aspartate: step 2/5. Functionally, catalyzes the NADPH-dependent formation of L-aspartate-semialdehyde (L-ASA) by the reductive dephosphorylation of L-aspartyl-4-phosphate. The chain is Aspartate-semialdehyde dehydrogenase from Methanothermobacter thermautotrophicus (strain ATCC 29096 / DSM 1053 / JCM 10044 / NBRC 100330 / Delta H) (Methanobacterium thermoautotrophicum).